The sequence spans 212 residues: Transcription antitermination protein NusB (212 aa).

Disordered stretches follow at residues 1–34 and 169–212; these read MSDE…SKSN and EHDR…QAAG. A compositionally biased stretch (low complexity) spans 178–212; it reads APAQPAAKADTATDAVADAATDAAAADDAADQAAG.

This sequence belongs to the NusB family.

Its function is as follows. Involved in transcription antitermination. Required for transcription of ribosomal RNA (rRNA) genes. Binds specifically to the boxA antiterminator sequence of the ribosomal RNA (rrn) operons. In Delftia acidovorans (strain DSM 14801 / SPH-1), this protein is Transcription antitermination protein NusB.